The following is a 181-amino-acid chain: Shikimate kinase 2 (181 aa).

Residue Gly12–Thr17 participates in ATP binding. The Mg(2+) site is built by Thr16 and Asp32. Positions 34, 58, and 79 each coordinate substrate. The interval Glu112–Lys126 is LID domain. Arg120 contacts ATP. Arg139 provides a ligand contact to substrate.

This sequence belongs to the shikimate kinase family. AroL subfamily. As to quaternary structure, monomer. Mg(2+) is required as a cofactor.

The protein resides in the cytoplasm. The enzyme catalyses shikimate + ATP = 3-phosphoshikimate + ADP + H(+). Its pathway is metabolic intermediate biosynthesis; chorismate biosynthesis; chorismate from D-erythrose 4-phosphate and phosphoenolpyruvate: step 5/7. In terms of biological role, catalyzes the specific phosphorylation of the 3-hydroxyl group of shikimic acid using ATP as a cosubstrate. The sequence is that of Shikimate kinase 2 from Salmonella schwarzengrund (strain CVM19633).